The sequence spans 146 residues: Flavodoxin (146 aa).

Residues 4-143 (SLIVYGSTTG…EIVSWGSGIA (140 aa)) enclose the Flavodoxin-like domain.

The protein belongs to the flavodoxin family. FMN serves as cofactor.

Its function is as follows. Low-potential electron donor to a number of redox enzymes. This is Flavodoxin from Maridesulfovibrio salexigens (strain ATCC 14822 / DSM 2638 / NCIMB 8403 / VKM B-1763) (Desulfovibrio salexigens).